The primary structure comprises 262 residues: Ubiquinone biosynthesis protein COQ4, mitochondrial (262 aa).

4 residues coordinate Zn(2+): His-154, Asp-155, His-158, and Glu-170. Residues 243 to 262 (LGIEQPPDLRQMKKDMAKKK) are disordered. The span at 252 to 262 (RQMKKDMAKKK) shows a compositional bias: basic and acidic residues.

Belongs to the COQ4 family. Component of a multi-subunit COQ enzyme complex, composed of at least COQ3, COQ4, COQ5, COQ6, COQ7 and COQ9. Zn(2+) serves as cofactor.

The protein localises to the mitochondrion inner membrane. The enzyme catalyses a 4-hydroxy-3-methoxy-5-(all-trans-polyprenyl)benzoate + H(+) = a 2-methoxy-6-(all-trans-polyprenyl)phenol + CO2. Its pathway is cofactor biosynthesis; ubiquinone biosynthesis. Lyase that catalyzes the C1-decarboxylation of 4-hydroxy-3-methoxy-5-(all-trans-polyprenyl)benzoic acid into 2-methoxy-6-(all-trans-polyprenyl)phenol during ubiquinone biosynthesis. The sequence is that of Ubiquinone biosynthesis protein COQ4, mitochondrial from Yarrowia lipolytica (strain CLIB 122 / E 150) (Yeast).